A 723-amino-acid chain; its full sequence is Nucleolar protein 11 (723 aa).

Lysine 346 is subject to N6-methyllysine. The interval 549–572 is disordered; that stretch reads FGPEDGNCSEDSQQLNDKPADTAH.

Interacts with UTP4. Interacts with FBL/fibrillarin in a transcription-dependent manner. May associate with the proposed t-UTP subcomplex of the SSU processome containing at least UTP4, WDR43, HEATR1, UTP15, WDR75.

It is found in the nucleus. The protein resides in the nucleolus. Ribosome biogenesis factor. May be required for both optimal rDNA transcription and small subunit (SSU) pre-rRNA processing at sites A', A0, 1 and 2b. The protein is Nucleolar protein 11 (Nol11) of Mus musculus (Mouse).